The sequence spans 575 residues: Glycosyltransferase family 92 protein At1g27200 (575 aa).

A helical transmembrane segment spans residues 22 to 44; the sequence is FLSQRYLILCFCCFFVLLFFLSS. In terms of domain architecture, GT92 spans 293–540; that stretch reads LCVCTMLWNQ…TEAIEPPDWK (248 aa).

It belongs to the glycosyltransferase 92 family.

Its subcellular location is the membrane. This chain is Glycosyltransferase family 92 protein At1g27200, found in Arabidopsis thaliana (Mouse-ear cress).